Here is a 387-residue protein sequence, read N- to C-terminus: 3-ketoacyl-CoA thiolase (387 aa).

The active-site Acyl-thioester intermediate is C91. Residues H343 and C373 each act as proton acceptor in the active site.

Belongs to the thiolase-like superfamily. Thiolase family. As to quaternary structure, heterotetramer of two alpha chains (FadB) and two beta chains (FadA).

Its subcellular location is the cytoplasm. It carries out the reaction an acyl-CoA + acetyl-CoA = a 3-oxoacyl-CoA + CoA. It participates in lipid metabolism; fatty acid beta-oxidation. In terms of biological role, catalyzes the final step of fatty acid oxidation in which acetyl-CoA is released and the CoA ester of a fatty acid two carbons shorter is formed. The sequence is that of 3-ketoacyl-CoA thiolase from Serratia proteamaculans (strain 568).